The chain runs to 328 residues: Adenosine receptor A1 (328 aa).

Topologically, residues 1–10 (MPPSISAFQA) are extracellular. A helical transmembrane segment spans residues 11-33 (AYIGIEVLIALVSVPGNVLVIWA). The Cytoplasmic segment spans residues 34 to 46 (VKVNQALRDATFC). The chain crosses the membrane as a helical span at residues 47–69 (FIVSLAVADVAVGALVIPLAILI). The Extracellular segment spans residues 70 to 80 (NIGPETYFHTC). Cys-80 and Cys-169 are joined by a disulfide. The helical transmembrane segment at 81 to 102 (LMVACPVLILTQSSILALLAIA) threads the bilayer. Residues 103–123 (VDRYLRVKIPLRYKAVVTPRR) lie on the Cytoplasmic side of the membrane. The chain crosses the membrane as a helical span at residues 124 to 146 (AAVAIAGCWILSLVVGLTPMFGW). Over 147 to 176 (NNLREVQRAWAANGSVGEPVIKCEFEKVIS) the chain is Extracellular. Asn-159 carries N-linked (GlcNAc...) asparagine glycosylation. A helical membrane pass occupies residues 177–201 (MEYMVYFNFFVWVLPPLLLMVLIYL). The Cytoplasmic portion of the chain corresponds to 202 to 235 (EVFYLIRRQLSKKASASSGDPHKYYGKELKIAKS). The helical transmembrane segment at 236–259 (LALILFLFALSWLPLHILNCVTLF) threads the bilayer. Residues 260–267 (CPSCQKPS) are Extracellular-facing. A helical membrane pass occupies residues 268–292 (ILVYTAIFLTHGNSAMNPIVYAFRI). At 293 to 328 (HKFRVTFLKIWNDHFRCRPAPAGDGDEDLPEEKPND) the chain is on the cytoplasmic side. A lipid anchor (S-palmitoyl cysteine) is attached at Cys-309.

Belongs to the G-protein coupled receptor 1 family.

Its subcellular location is the cell membrane. Its function is as follows. Receptor for adenosine. The activity of this receptor is mediated by G proteins which inhibit adenylyl cyclase. This chain is Adenosine receptor A1 (ADORA1), found in Oryctolagus cuniculus (Rabbit).